A 471-amino-acid chain; its full sequence is Glutamate--tRNA ligase (471 aa).

The short motif at 9–19 is the 'HIGH' region element; sequence PSPTGFLHVGG. 4 residues coordinate Zn(2+): Cys98, Cys100, Cys125, and Asp127. Residues 237–241 carry the 'KMSKS' region motif; the sequence is KLSKR. Lys240 contributes to the ATP binding site.

Belongs to the class-I aminoacyl-tRNA synthetase family. Glutamate--tRNA ligase type 1 subfamily. Monomer. Requires Zn(2+) as cofactor.

The protein localises to the cytoplasm. It catalyses the reaction tRNA(Glu) + L-glutamate + ATP = L-glutamyl-tRNA(Glu) + AMP + diphosphate. Catalyzes the attachment of glutamate to tRNA(Glu) in a two-step reaction: glutamate is first activated by ATP to form Glu-AMP and then transferred to the acceptor end of tRNA(Glu). The polypeptide is Glutamate--tRNA ligase (Aeromonas hydrophila subsp. hydrophila (strain ATCC 7966 / DSM 30187 / BCRC 13018 / CCUG 14551 / JCM 1027 / KCTC 2358 / NCIMB 9240 / NCTC 8049)).